Reading from the N-terminus, the 257-residue chain is Ditrans,polycis-undecaprenyl-diphosphate synthase ((2E,6E)-farnesyl-diphosphate specific) (257 aa).

Asp-24 is a catalytic residue. Asp-24 serves as a coordination point for Mg(2+). Residues 25–28, Trp-29, Arg-37, His-41, and 69–71 contribute to the substrate site; these read GNGR and SSE. Asn-72 serves as the catalytic Proton acceptor. Substrate is bound by residues Trp-73, Arg-75, Arg-192, and 198–200; that span reads RIS. Glu-211 is a binding site for Mg(2+).

It belongs to the UPP synthase family. As to quaternary structure, homodimer. Requires Mg(2+) as cofactor.

The enzyme catalyses 8 isopentenyl diphosphate + (2E,6E)-farnesyl diphosphate = di-trans,octa-cis-undecaprenyl diphosphate + 8 diphosphate. Functionally, catalyzes the sequential condensation of isopentenyl diphosphate (IPP) with (2E,6E)-farnesyl diphosphate (E,E-FPP) to yield (2Z,6Z,10Z,14Z,18Z,22Z,26Z,30Z,34E,38E)-undecaprenyl diphosphate (di-trans,octa-cis-UPP). UPP is the precursor of glycosyl carrier lipid in the biosynthesis of bacterial cell wall polysaccharide components such as peptidoglycan and lipopolysaccharide. This Aliivibrio fischeri (strain ATCC 700601 / ES114) (Vibrio fischeri) protein is Ditrans,polycis-undecaprenyl-diphosphate synthase ((2E,6E)-farnesyl-diphosphate specific).